A 265-amino-acid polypeptide reads, in one-letter code: uncharacterized protein (265 aa).

Residues 233–265 (STACGSDQRPTRLPRASCSSRSISGSAARPWKR) are disordered. The span at 247-265 (RASCSSRSISGSAARPWKR) shows a compositional bias: low complexity.

This is an uncharacterized protein from Escherichia coli.